The sequence spans 690 residues: Methionine--tRNA ligase (690 aa).

Residues 20-30 carry the 'HIGH' region motif; that stretch reads PYANGSIHLGH. The Zn(2+) site is built by Cys-151, Cys-154, Cys-164, and Cys-167. Positions 337–341 match the 'KMSKS' region motif; it reads KMSKS. Residue Lys-340 coordinates ATP. Positions 589–690 constitute a tRNA-binding domain; the sequence is DFAKVDLRIA…EGAQPGMRVM (102 aa).

The protein belongs to the class-I aminoacyl-tRNA synthetase family. MetG type 1 subfamily. In terms of assembly, homodimer. Zn(2+) is required as a cofactor.

Its subcellular location is the cytoplasm. The catalysed reaction is tRNA(Met) + L-methionine + ATP = L-methionyl-tRNA(Met) + AMP + diphosphate. Its function is as follows. Is required not only for elongation of protein synthesis but also for the initiation of all mRNA translation through initiator tRNA(fMet) aminoacylation. This is Methionine--tRNA ligase from Vibrio vulnificus (strain CMCP6).